Consider the following 241-residue polypeptide: Probable transcriptional regulatory protein Mpe_A1337 (241 aa).

The tract at residues 1–20 (MAGHSKWANIQHRKGRQDEK) is disordered.

Belongs to the TACO1 family.

Its subcellular location is the cytoplasm. The protein is Probable transcriptional regulatory protein Mpe_A1337 of Methylibium petroleiphilum (strain ATCC BAA-1232 / LMG 22953 / PM1).